Reading from the N-terminus, the 239-residue chain is 7-cyano-7-deazaguanine synthase (239 aa).

8–18 (FSGGLDSTACL) contributes to the ATP binding site. Positions 194, 209, 212, and 215 each coordinate Zn(2+).

This sequence belongs to the QueC family. It depends on Zn(2+) as a cofactor.

It carries out the reaction 7-carboxy-7-deazaguanine + NH4(+) + ATP = 7-cyano-7-deazaguanine + ADP + phosphate + H2O + H(+). The protein operates within purine metabolism; 7-cyano-7-deazaguanine biosynthesis. Its function is as follows. Catalyzes the ATP-dependent conversion of 7-carboxy-7-deazaguanine (CDG) to 7-cyano-7-deazaguanine (preQ(0)). This is 7-cyano-7-deazaguanine synthase from Pyrococcus horikoshii (strain ATCC 700860 / DSM 12428 / JCM 9974 / NBRC 100139 / OT-3).